The following is a 327-amino-acid chain: tRNA(Ile)-lysidine synthase (327 aa).

32–37 (SGGQDS) contacts ATP.

Belongs to the tRNA(Ile)-lysidine synthase family.

It localises to the cytoplasm. The enzyme catalyses cytidine(34) in tRNA(Ile2) + L-lysine + ATP = lysidine(34) in tRNA(Ile2) + AMP + diphosphate + H(+). Functionally, ligates lysine onto the cytidine present at position 34 of the AUA codon-specific tRNA(Ile) that contains the anticodon CAU, in an ATP-dependent manner. Cytidine is converted to lysidine, thus changing the amino acid specificity of the tRNA from methionine to isoleucine. The protein is tRNA(Ile)-lysidine synthase of Synechococcus sp. (strain JA-2-3B'a(2-13)) (Cyanobacteria bacterium Yellowstone B-Prime).